A 471-amino-acid polypeptide reads, in one-letter code: Ribulose bisphosphate carboxylase large chain 2 (471 aa).

Substrate-binding residues include Asn116 and Thr166. Lys168 (proton acceptor) is an active-site residue. A substrate-binding site is contributed by Lys170. Mg(2+)-binding residues include Lys194, Asp196, and Glu197. N6-carboxylysine is present on Lys194. His287 functions as the Proton acceptor in the catalytic mechanism. Residues Arg288, His320, and Ser372 each contribute to the substrate site.

The protein belongs to the RuBisCO large chain family. Type I subfamily. In terms of assembly, heterohexadecamer of 8 large chains and 8 small chains. Forms a CsoS2-CsoS1-RuBisCO complex. The cofactor is Mg(2+).

The protein localises to the carboxysome. The enzyme catalyses 2 (2R)-3-phosphoglycerate + 2 H(+) = D-ribulose 1,5-bisphosphate + CO2 + H2O. It catalyses the reaction D-ribulose 1,5-bisphosphate + O2 = 2-phosphoglycolate + (2R)-3-phosphoglycerate + 2 H(+). Functionally, ruBisCO catalyzes two reactions: the carboxylation of D-ribulose 1,5-bisphosphate, the primary event in carbon dioxide fixation, as well as the oxidative fragmentation of the pentose substrate. Both reactions occur simultaneously and in competition at the same active site. Replacing the endogenous type I ccbLS genes in H.neapolitanus with this carboxysomally targeted enzyme reconstitutes RuBisCO with about 25% of normal activity; the active enzyme is targeted to carboxysomes. This is Ribulose bisphosphate carboxylase large chain 2 from Hydrogenovibrio crunogenus (strain DSM 25203 / XCL-2) (Thiomicrospira crunogena).